We begin with the raw amino-acid sequence, 119 residues long: MKALSPVRGCYEAVCCLSERSLAIARGRGKGPAAEEPLSLLDDMNHCYSRLRELVPGVPRGTQLSQVEILQRVIDYILDLQVVLAEPAPGPPDGPHLPIQTAELAPELVISNDKRSFCH.

Positions 28–80 (RGKGPAAEEPLSLLDDMNHCYSRLRELVPGVPRGTQLSQVEILQRVIDYILDL) constitute a bHLH domain.

As to quaternary structure, homodimer, and heterodimer with other HLH proteins. Interacts with COPS5 and COPS7A. Interacts with IFI204. Interacts with GATA4 and NKX2-5. Interacts with ANKRD2; both proteins cooperate in myoblast differentiation. Interacts with CLOCK and BMAL1.

The protein localises to the nucleus. Transcriptional regulator (lacking a basic DNA binding domain) which negatively regulates the basic helix-loop-helix (bHLH) transcription factors by forming heterodimers and inhibiting their DNA binding and transcriptional activity. Implicated in regulating a variety of cellular processes, including cellular growth, senescence, differentiation, apoptosis, angiogenesis, and neoplastic transformation. Involved in myogenesis by inhibiting skeletal muscle and cardiac myocyte differentiation and promoting muscle precursor cells proliferation. Inhibits the binding of E2A-containing protein complexes to muscle creatine kinase E-box enhancer. Regulates the circadian clock by repressing the transcriptional activator activity of the CLOCK-BMAL1 heterodimer. The protein is DNA-binding protein inhibitor ID-3 (ID3) of Canis lupus familiaris (Dog).